Here is a 228-residue protein sequence, read N- to C-terminus: MENQKILVAKYAIDRYIKSNMNLGIGTGTTVYHAIKYLSEKLKSGNLKNLKFYTTSSDTKYLLSKEQIPYESNFSKLNKNLDIAIDGADEILLEKKSLIKGMGGAHLMEKVIAYNSETLLIIADETKIVKKLGTKMPIPIEVAPNAVGFIMTRLEEMNLDITLRICNEKKGPIITDNNNYILDVKMHVENPEGTEKYFKLFPGILEIGIFNHKNTKIVYYQNKQIKEA.

Substrate contacts are provided by residues 27-30 (TGTT), 86-89 (DGAD), and 100-103 (KGMG). Glu109 functions as the Proton acceptor in the catalytic mechanism. A substrate-binding site is contributed by Lys127.

Belongs to the ribose 5-phosphate isomerase family. In terms of assembly, homodimer.

It catalyses the reaction aldehydo-D-ribose 5-phosphate = D-ribulose 5-phosphate. It functions in the pathway carbohydrate degradation; pentose phosphate pathway; D-ribose 5-phosphate from D-ribulose 5-phosphate (non-oxidative stage): step 1/1. Its function is as follows. Catalyzes the reversible conversion of ribose-5-phosphate to ribulose 5-phosphate. The chain is Ribose-5-phosphate isomerase A from Borreliella afzelii (strain PKo) (Borrelia afzelii).